Here is a 258-residue protein sequence, read N- to C-terminus: Undecaprenyl-diphosphatase (258 aa).

8 helical membrane passes run 1-21 (MDFLNAVILGIVEGLTEFLPV), 42-62 (LKCFEVVIQLGSILAVVFMFF), 69-89 (FNLWIKLAIGFVPTAIIGFLA), 96-116 (FFEPSTVAYMLIIGGIVFIVV), 135-155 (VSFKQAFIIGLSQCFAMIPGT), 173-193 (EVAARFSFLLAIPTMFAATAY), 211-231 (IFLVGGFMAFIVALIVIKLFL), and 237-257 (FSYISFGIYRIILGSIFLIYI).

The protein belongs to the UppP family.

The protein localises to the cell inner membrane. The enzyme catalyses di-trans,octa-cis-undecaprenyl diphosphate + H2O = di-trans,octa-cis-undecaprenyl phosphate + phosphate + H(+). Its function is as follows. Catalyzes the dephosphorylation of undecaprenyl diphosphate (UPP). Confers resistance to bacitracin. The sequence is that of Undecaprenyl-diphosphatase from Campylobacter fetus subsp. fetus (strain 82-40).